The following is a 1596-amino-acid chain: A-kinase anchor protein SPHKAP (1596 aa).

Disordered stretches follow at residues 214–233 (KHGRLAGQRAAEDDTNRSVS), 242–319 (ASEQ…TPKQ), 389–432 (DNSE…GHPA), 462–481 (SGEEYECEDEEEESETDQGE), and 760–809 (EQSD…SSSS). Over residues 292-306 (TLCTSSNSQKLSRTY) the composition is skewed to polar residues. The segment covering 462–479 (SGEEYECEDEEEESETDQ) has biased composition (acidic residues). The PKA-RII subunit binding domain stretch occupies residues 829-846 (FAEDLATTVVSMATELAA). 3 disordered regions span residues 958 to 1022 (VVDT…ISKQ), 1282 to 1310 (VGERRHGFKHSRCNNSGNRPGVEHQENSC), and 1328 to 1443 (VPLI…SSLG). Residues 959-971 (VDTSKSGQSSRSR) show a composition bias toward polar residues. Over residues 1333-1356 (IEPDQREEASEEKGGVETHHREAS) the composition is skewed to basic and acidic residues. The segment covering 1357–1372 (HQTQQQSGKGSETATK) has biased composition (polar residues). Low complexity-rich tracts occupy residues 1398 to 1409 (LSASSEESGSGS) and 1430 to 1443 (LSEGNGNSSTSSLG).

The protein belongs to the AKAP110 family.

Its subcellular location is the cytoplasm. Its function is as follows. Anchoring protein that mediates the subcellular compartmentation of cAMP-dependent protein kinase (PKA type II). In Danio rerio (Zebrafish), this protein is A-kinase anchor protein SPHKAP (sphkap).